Reading from the N-terminus, the 373-residue chain is Glutamine synthetase (373 aa).

Ala2 bears the N-acetylalanine mark. A required for glutamine-induced ubiquitination by CRL4(CRBN) and proteasomal degradation region spans residues 2–25 (ATSASSHLNKGIKQMYMSLPQGEK). N6-acetyllysine occurs at positions 11 and 14. Positions 24 to 106 (EKVQAMYIWV…VFCEVFKYNQ (83 aa)) constitute a GS beta-grasp domain. Tyr104 carries the phosphotyrosine modification. The GS catalytic domain maps to 113–373 (LRHTCKRIMD…TGDQPFQYKN (261 aa)). Glu134 provides a ligand contact to ATP. Glu134, Glu136, Glu196, and Glu203 together coordinate Mn(2+). Position 203–208 (203–208 (EFQIGP)) interacts with ATP. Position 246–247 (246–247 (NW)) interacts with L-glutamate. A Mn(2+)-binding site is contributed by His253. Residues 255-257 (NFS), Arg319, and Arg324 each bind ATP. Arg319 serves as a coordination point for L-glutamate. An ADP-binding site is contributed by 336 to 338 (YFE). Glu338 provides a ligand contact to Mn(2+). Arg340 lines the L-glutamate pocket. Residue Ser343 is modified to Phosphoserine.

It belongs to the glutamine synthetase family. In terms of assembly, decamer; composed of two pentamers. Interacts with PALMD. Interacts with RHOJ. Interacts with BEST2; this interaction tethers a fraction of GLUL to the membrane, causing a decrease of cytosolic glutamine synthase (GS) activity and inhibits the chloride channel activity of BEST2 by affecting the gating at the aperture in the absence of intracellular glutamate. Requires Mg(2+) as cofactor. Mn(2+) is required as a cofactor. Palmitoylated; undergoes autopalmitoylation. Post-translationally, acetylated by EP300/p300; acetylation is stimulated by increased glutamine levels and promotes ubiquitin-mediated proteasomal degradation. In terms of processing, ubiquitinated by ZNRF1. Ubiquitinated by the DCX (DDB1-CUL4-X-box) E3 ubiquitin-protein ligase complex called CRL4(CRBN), leading to proteasomal degradation.

Its subcellular location is the cytoplasm. It is found in the cytosol. It localises to the microsome. The protein resides in the mitochondrion. The protein localises to the cell membrane. The enzyme catalyses L-glutamate + NH4(+) + ATP = L-glutamine + ADP + phosphate + H(+). The catalysed reaction is L-cysteinyl-[protein] + hexadecanoyl-CoA = S-hexadecanoyl-L-cysteinyl-[protein] + CoA. Glutamine synthetase activity is inhibited by methionine sulfoximine (MSO). In terms of biological role, glutamine synthetase that catalyzes the ATP-dependent conversion of glutamate and ammonia to glutamine. Its role depends on tissue localization: in the brain, it regulates the levels of toxic ammonia and converts neurotoxic glutamate to harmless glutamine, whereas in the liver, it is one of the enzymes responsible for the removal of ammonia. Plays a key role in ammonium detoxification during erythropoiesis: the glutamine synthetase activity is required to remove ammonium generated by porphobilinogen deaminase (HMBS) during heme biosynthesis to prevent ammonium accumulation and oxidative stress. Essential for proliferation of fetal skin fibroblasts. Independently of its glutamine synthetase activity, required for endothelial cell migration during vascular development. Involved in angiogenesis by regulating membrane localization and activation of the GTPase RHOJ, possibly by promoting RHOJ palmitoylation. May act as a palmitoyltransferase for RHOJ: able to autopalmitoylate and then transfer the palmitoyl group to RHOJ. Plays a role in ribosomal 40S subunit biogenesis. Through the interaction with BEST2, inhibits BEST2 channel activity by affecting the gating at the aperture in the absence of intracellular L-glutamate, but sensitizes BEST2 to intracellular L-glutamate, which promotes the opening of BEST2 and thus relieves its inhibitory effect on BEST2. The polypeptide is Glutamine synthetase (Cricetulus griseus (Chinese hamster)).